The chain runs to 1213 residues: Filamin-A-interacting protein 1 (1213 aa).

A disordered region spans residues 1 to 70; the sequence is MRSRNQGGES…TSGECERKTK (70 aa). Basic and acidic residues predominate over residues 61 to 70; it reads TSGECERKTK. Ser138 carries the post-translational modification Phosphoserine. Coiled-coil stretches lie at residues 192-591 and 624-781; these read DYMN…ELSC and PEDN…LSKR. 2 disordered regions span residues 878 to 900 and 949 to 976; these read NGPSITQEKGPRTNSSPGHPGEV and KPRITIIPSPNVMPQKQKSGDTTLGPER. Composition is skewed to polar residues over residues 880–894 and 960–970; these read PSITQEKGPRTNSSP and VMPQKQKSGDT. A Phosphoserine modification is found at Ser979. The segment at 1103 to 1213 is disordered; sequence VSTGTVLRSP…STTSLGGGKG (111 aa). Residues 1125–1138 show a composition bias toward low complexity; that stretch reads VTSTITITPVTTSS. Over residues 1139-1156 the composition is skewed to polar residues; sequence ARGTQSVSGQDGSSQRPT. The segment covering 1168–1179 has biased composition (low complexity); sequence AGKPVVAAPGAG.

It belongs to the FILIP1 family. Interacts with FLNA. Interacts with RHOD (in GTP-bound form). As to expression, moderately expressed in adult heart and brain. Weakly expressed in lung, skeletal muscle, ovary, testis, kidney, and fetal brain, and hardly detectable in liver, pancreas, spleen, and fetal liver. Within brain, moderate expression is found in amygdala and caudate nucleus. Expressed in skin fibroblasts.

It is found in the cytoplasm. The protein localises to the cytoskeleton. Its function is as follows. By acting through a filamin-A/F-actin axis, it controls the start of neocortical cell migration from the ventricular zone. May be able to induce the degradation of filamin-A. The polypeptide is Filamin-A-interacting protein 1 (FILIP1) (Homo sapiens (Human)).